The sequence spans 341 residues: MSTTRTPKVSERVAPKPADPQPAKKKRGEDDDGPDFRTLLHAWLESHRASMADSLRRLGKQPIGSFFTCLVMAVALSMPMGLSLLLKNIEQLGGSWQRAAQISLFLKLDAGSRDGEALRDEIKGMPGVADAQYVSREQALEEFQQQSGLGEALRELPDNPLPGVVVVTPTEVDKPALEALRQRLSELPRVEVAQLDLVWVERLAAILKLGDRFVFGLAVMLISALLLVIGNTIRLHIENRRIEIEVIKLVGGTDAYVRRPFLYMGALYGLGAGLLAWGILAFGLNWLNEAVVGLSGLYGSDFALGGVPASDGLSLLIGAVLLGYIGAWIAVARHLNELAPR.

A disordered region spans residues 1-34 (MSTTRTPKVSERVAPKPADPQPAKKKRGEDDDGP). Residues 1 to 65 (MSTTRTPKVS…RRLGKQPIGS (65 aa)) are Cytoplasmic-facing. The helical transmembrane segment at 66 to 86 (FFTCLVMAVALSMPMGLSLLL) threads the bilayer. Residues 87-212 (KNIEQLGGSW…LAAILKLGDR (126 aa)) are Periplasmic-facing. A helical membrane pass occupies residues 213 to 233 (FVFGLAVMLISALLLVIGNTI). The Cytoplasmic segment spans residues 234 to 263 (RLHIENRRIEIEVIKLVGGTDAYVRRPFLY). A helical transmembrane segment spans residues 264 to 284 (MGALYGLGAGLLAWGILAFGL). The Periplasmic segment spans residues 285–311 (NWLNEAVVGLSGLYGSDFALGGVPASD). Residues 312 to 332 (GLSLLIGAVLLGYIGAWIAVA) form a helical membrane-spanning segment. Topologically, residues 333-341 (RHLNELAPR) are cytoplasmic.

The protein belongs to the ABC-4 integral membrane protein family. FtsX subfamily. As to quaternary structure, forms a membrane-associated complex with FtsE.

Its subcellular location is the cell inner membrane. Part of the ABC transporter FtsEX involved in cellular division. The sequence is that of Cell division protein FtsX from Pseudomonas putida (Arthrobacter siderocapsulatus).